The primary structure comprises 169 residues: MTDNTPLTLAAITGAHGVRGDVRLKLLGEGLEALKAHSSFNEGTLTLKSVRSDNKGGAIARFAEVQGREQAEKLRGTTLTVPREALPPLEEGEYYFADLIGLDAVTDAGKRVGKVIDVHNYGATDIVEIAKDPVPEKGMKTFMVPMTTHAVVEWNGERIVIATDFAHPD.

Residues 91-167 (EGEYYFADLI…RIVIATDFAH (77 aa)) form the PRC barrel domain.

The protein belongs to the RimM family. In terms of assembly, binds ribosomal protein uS19.

It localises to the cytoplasm. Functionally, an accessory protein needed during the final step in the assembly of 30S ribosomal subunit, possibly for assembly of the head region. Essential for efficient processing of 16S rRNA. May be needed both before and after RbfA during the maturation of 16S rRNA. It has affinity for free ribosomal 30S subunits but not for 70S ribosomes. In Erythrobacter litoralis (strain HTCC2594), this protein is Ribosome maturation factor RimM.